The chain runs to 250 residues: uncharacterized protein (250 aa).

The N-terminal stretch at 1-25 (MKTLRTLCVLMILSGVIFFGLKIDA) is a signal peptide.

This is an uncharacterized protein from Bacillus subtilis (strain 168).